The primary structure comprises 287 residues: MGGGGGGFPEPEDSVLFRRGTGESDDSDVWDDTALIKAYDKAVASFKHALKNGDISEASEKPKGTPKRKSAKNKSQRKNTTSPSKQWKVGDNCCAIWSEDGCIYPATIASIDFKRETCVVVYTGYGNREEQNLSDLLSPTSEVANIEQNAQENENESQISTDESENSSRSPLNKPNNIRSRAAPWNSFLPPPPHMPRSGLGPGKSGLNFSGPPPPPPPPPHFLSRWLPPFPAGPPMIPPPPPICPDSLDDADALGSMLISWYMSGYHTGYYMGFKQSQKEGRYSHFN.

The segment at 1 to 28 is disordered; that stretch reads MGGGGGGFPEPEDSVLFRRGTGESDDSD. The tract at residues 9–40 is P1 (binding site for GEMIN2); that stretch reads PEPEDSVLFRRGTGESDDSDVWDDTALIKAYD. At Thr21 the chain carries Phosphothreonine. Phosphoserine occurs at positions 24 and 27. A Glycyl lysine isopeptide (Lys-Gly) (interchain with G-Cter in SUMO2) cross-link involves residue Lys47. Disordered stretches follow at residues 51 to 86 and 149 to 221; these read KNGD…PSKQ and NAQE…PPPH. The span at 64-77 shows a compositional bias: basic residues; the sequence is GTPKRKSAKNKSQR. Residue Thr65 is modified to Phosphothreonine. Residue Thr80 is modified to Phosphothreonine; by PKA. The Tudor domain occupies 86–146; sequence QWKVGDNCCA…LSPTSEVANI (61 aa). The segment at 92 to 204 is required for interaction with RPP20/POP7; that stretch reads NCCAIWSEDG…MPRSGLGPGK (113 aa). Residues 149-160 show a composition bias toward low complexity; it reads NAQENENESQIS. Polar residues predominate over residues 167–179; it reads SSRSPLNKPNNIR. Lys204 participates in a covalent cross-link: Glycyl lysine isopeptide (Lys-Gly) (interchain with G-Cter in SUMO2). The span at 211–221 shows a compositional bias: pro residues; that stretch reads GPPPPPPPPPH. A P2 (binding site for SM B) region spans residues 234–261; sequence PPMIPPPPPICPDSLDDADALGSMLISW. Residues 273-287 are required for interaction with SYNCRIP; the sequence is GFKQSQKEGRYSHFN.

It belongs to the SMN family. Homooligomer; may form higher order homooligomers in the dimer to octamer range. Part of the core SMN complex that contains SMN1, GEMIN2/SIP1, DDX20/GEMIN3, GEMIN4, GEMIN5, GEMIN6, GEMIN7, GEMIN8 and STRAP/UNRIP. Part of the SMN-Sm complex that contains SMN1, GEMIN2/SIP1, DDX20/GEMIN3, GEMIN4, GEMIN5, GEMIN6, GEMIN7, GEMIN8, STRAP/UNRIP and the Sm proteins SNRPB, SNRPD1, SNRPD2, SNRPD3, SNRPE, SNRPF and SNRPG. Component of an import snRNP complex composed of KPNB1, RNUT1, SMN1 and ZNF259. Interacts with DDX20, FBL, NOLA1, RNUT1, SYNCRIP and with several spliceosomal snRNP core Sm proteins, including SNRPB, SNRPD1, SNRPD2, SNRPD3, SNRPE and ILF3. Interacts with GEMIN2; the interaction is direct. Interacts with GEMIN3; the interaction is direct. Interacts with GEMIN8; the interaction is direct. Interacts with SNRPB; the interaction is direct. Interacts (via Tudor domain) with SNRPD1 (via C-terminus); the interaction is direct. Interacts with SNRPD2; the interaction is direct. Interacts (via Tudor domain) with SNRPD3 (via C-terminus); the interaction is direct. Interacts with SNRPE; the interaction is direct. Interacts with OSTF1, LSM10, LSM11 and RPP20/POP7. Interacts (via C-terminal region) with ZPR1 (via C-terminal region). Interacts (via Tudor domain) with COIL. Interacts with SETX; recruits SETX to POLR2A. Interacts with POLR2A (via the C-terminal domain (CTD)). Interacts with PRMT5. Interacts with XRN2. Interacts (via C-terminus) with FMR1 (via C-terminus); the interaction is direct and occurs in a RNA-independent manner. Interacts (via Tudor domain) with SF3B2 ('Arg-508'-methylated form). Interacts with WRAP53/TCAB1. Interacts (via Tudor domain) with ELAVL4 in an RNA-independent manner; the interaction is required for localization of ELAVL4 to RNA granules. Interacts with FRG1.

It localises to the nucleus. It is found in the gem. The protein localises to the cajal body. The protein resides in the cytoplasm. Its subcellular location is the cytoplasmic granule. It localises to the perikaryon. It is found in the cell projection. The protein localises to the neuron projection. The protein resides in the axon. Its subcellular location is the myofibril. It localises to the sarcomere. It is found in the z line. Functionally, the SMN complex catalyzes the assembly of small nuclear ribonucleoproteins (snRNPs), the building blocks of the spliceosome, and thereby plays an important role in the splicing of cellular pre-mRNAs. Most spliceosomal snRNPs contain a common set of Sm proteins SNRPB, SNRPD1, SNRPD2, SNRPD3, SNRPE, SNRPF and SNRPG that assemble in a heptameric protein ring on the Sm site of the small nuclear RNA to form the core snRNP (Sm core). In the cytosol, the Sm proteins SNRPD1, SNRPD2, SNRPE, SNRPF and SNRPG are trapped in an inactive 6S pICln-Sm complex by the chaperone CLNS1A that controls the assembly of the core snRNP. To assemble core snRNPs, the SMN complex accepts the trapped 5Sm proteins from CLNS1A forming an intermediate. Binding of snRNA inside 5Sm ultimately triggers eviction of the SMN complex, thereby allowing binding of SNRPD3 and SNRPB to complete assembly of the core snRNP. Within the SMN complex, SMN1 acts as a structural backbone and together with GEMIN2 it gathers the Sm complex subunits. Ensures the correct splicing of U12 intron-containing genes that may be important for normal motor and proprioceptive neurons development. Also required for resolving RNA-DNA hybrids created by RNA polymerase II, that form R-loop in transcription terminal regions, an important step in proper transcription termination. May also play a role in the metabolism of small nucleolar ribonucleoprotein (snoRNPs). The chain is Survival motor neuron protein (SMN1) from Bos taurus (Bovine).